The following is a 396-amino-acid chain: Aspartic protease 1 (396 aa).

The signal sequence occupies residues 1–15 (MQTFVLLALVAACSA). In terms of domain architecture, Peptidase A1 spans 68–389 (YLGNITLGTP…DIGNGQIGFA (322 aa)). An N-linked (GlcNAc...) asparagine glycan is attached at asparagine 71. Residue aspartate 86 is part of the active site. Residues cysteine 99 and cysteine 104 are joined by a disulfide bond. The active site involves aspartate 278. An intrachain disulfide couples cysteine 313 to cysteine 349.

The protein belongs to the peptidase A1 family. Interacts with B.thuringiensis endotoxin Cry6Aa; the interaction prevents Cry6Aa proteolysis by host gut proteases.

The protein localises to the cytoplasm. Its subcellular location is the lysosome. It localises to the secreted. Functionally, aspartic protease, which is part of the necrosis cell death pathway. Promotes B.thuringiensis Cry6Aa stability by preventing its proteolysis by host gut proteases. Required for Cry6Aa-induced necrotic death of intestinal cells. Cry6Aa uptake into the host intestinal cells triggers an increase in intracellular Ca(2+) levels leading to lysosome rupture and to the subsequent release of asp-1 which leads to necrosis. The protein is Aspartic protease 1 of Caenorhabditis elegans.